We begin with the raw amino-acid sequence, 491 residues long: Glutamyl-tRNA(Gln) amidotransferase subunit A (491 aa).

Residues Lys79 and Ser154 each act as charge relay system in the active site. Ser178 functions as the Acyl-ester intermediate in the catalytic mechanism.

Belongs to the amidase family. GatA subfamily. Heterotrimer of A, B and C subunits.

It catalyses the reaction L-glutamyl-tRNA(Gln) + L-glutamine + ATP + H2O = L-glutaminyl-tRNA(Gln) + L-glutamate + ADP + phosphate + H(+). In terms of biological role, allows the formation of correctly charged Gln-tRNA(Gln) through the transamidation of misacylated Glu-tRNA(Gln) in organisms which lack glutaminyl-tRNA synthetase. The reaction takes place in the presence of glutamine and ATP through an activated gamma-phospho-Glu-tRNA(Gln). The sequence is that of Glutamyl-tRNA(Gln) amidotransferase subunit A from Synechococcus sp. (strain CC9605).